The following is a 626-amino-acid chain: MKTPTDQRFDYVKIGLASPERIRQWGERTLPNGQVVGEVTKPETINYRTLKPEMDGLFCEKIFGPSKDWECWCGKYKRVRHRGIVCERCGVEVTESRVRRHRMGFIKLAAPVTHVWYLKGIPSYLSILLDMPLRDVEQIVYFNAYVVLDPGNAGNLSYKQLLSEDQWLEIEEEIYAEDSELVGIEVGIGAEAIQRLLQEINLEEEAERLRTEIVESKGQKRAKLIKRLRVIDNFIATGSQAEWMVLSVIPVIPPDLRPMVQLDGGRFATSDLNDLYRRVINRNNRLSRLQEILAPEIIVRNEKRMLQEAVDALIDNGRRGRTVVGANNRALKSLSDIIEGKQGRFRQNLLGKRVDYSGRSVIVVGPKLKIYQCGLPREMAIELFQPFVIHRLIKLGIVNNIKAAKKMIQRGDANVWHVLDEVITGHPVMLNRAPTLHRLGIQAFEPILVEGRAIQLHPLVCPAFNADFDGDQMAVHIPLSLEAQSEARLLMLACHNILSPATGRPIVAPSQDMVLGCYYLTAENPKAQKGGGRYFASMDDAIRAFDQGLVDLHASVWLRLPVGEKVKTNKPDEEVLETETLPDGSIWKYYRERKTREKDGEIISQYVRTTVGRIIYNKTILEALVV.

Residues C71, C73, C86, and C89 each contribute to the Zn(2+) site. Positions 467, 469, and 471 each coordinate Mg(2+).

Belongs to the RNA polymerase beta' chain family. RpoC1 subfamily. As to quaternary structure, in cyanobacteria the RNAP catalytic core is composed of 2 alpha, 1 beta, 1 beta', 1 gamma and 1 omega subunit. When a sigma factor is associated with the core the holoenzyme is formed, which can initiate transcription. The cofactor is Mg(2+). Zn(2+) serves as cofactor.

It carries out the reaction RNA(n) + a ribonucleoside 5'-triphosphate = RNA(n+1) + diphosphate. Functionally, DNA-dependent RNA polymerase catalyzes the transcription of DNA into RNA using the four ribonucleoside triphosphates as substrates. The sequence is that of DNA-directed RNA polymerase subunit gamma from Microcystis aeruginosa (strain NIES-843 / IAM M-2473).